The primary structure comprises 72 residues: Translation initiation factor IF-1 (72 aa).

Residues 1–72 form the S1-like domain; the sequence is MAKEGAIEVE…TRGRIVYRYK (72 aa).

It belongs to the IF-1 family. In terms of assembly, component of the 30S ribosomal translation pre-initiation complex which assembles on the 30S ribosome in the order IF-2 and IF-3, IF-1 and N-formylmethionyl-tRNA(fMet); mRNA recruitment can occur at any time during PIC assembly.

The protein localises to the cytoplasm. Its function is as follows. One of the essential components for the initiation of protein synthesis. Stabilizes the binding of IF-2 and IF-3 on the 30S subunit to which N-formylmethionyl-tRNA(fMet) subsequently binds. Helps modulate mRNA selection, yielding the 30S pre-initiation complex (PIC). Upon addition of the 50S ribosomal subunit IF-1, IF-2 and IF-3 are released leaving the mature 70S translation initiation complex. This Corynebacterium glutamicum (strain R) protein is Translation initiation factor IF-1.